Reading from the N-terminus, the 441-residue chain is Xaa-Pro dipeptidase (441 aa).

Residues aspartate 244, aspartate 255, histidine 336, glutamate 381, and glutamate 420 each coordinate Mn(2+).

It belongs to the peptidase M24B family. Bacterial-type prolidase subfamily. Mn(2+) is required as a cofactor.

It carries out the reaction Xaa-L-Pro dipeptide + H2O = an L-alpha-amino acid + L-proline. Its function is as follows. Splits dipeptides with a prolyl residue in the C-terminal position. The chain is Xaa-Pro dipeptidase from Xanthomonas euvesicatoria pv. vesicatoria (strain 85-10) (Xanthomonas campestris pv. vesicatoria).